The following is a 337-amino-acid chain: Fructose-1,6-bisphosphatase class 1 (337 aa).

4 residues coordinate Mg(2+): Glu89, Asp112, Leu114, and Asp115. Substrate contacts are provided by residues 115–118, Asn208, Tyr241, and Lys271; that span reads DGSS. Position 277 (Glu277) interacts with Mg(2+).

This sequence belongs to the FBPase class 1 family. Homotetramer. Mg(2+) is required as a cofactor.

It is found in the cytoplasm. It catalyses the reaction beta-D-fructose 1,6-bisphosphate + H2O = beta-D-fructose 6-phosphate + phosphate. It functions in the pathway carbohydrate biosynthesis; gluconeogenesis. This Yersinia pestis bv. Antiqua (strain Antiqua) protein is Fructose-1,6-bisphosphatase class 1.